The sequence spans 346 residues: Leucine zipper protein 2 (346 aa).

The signal sequence occupies residues 1–19 (MKFSPAHYLLPLLPALVLS). Positions 16 to 211 (LVLSTRQDYE…QMKAMKETVQ (196 aa)) form a coiled coil. N-linked (GlcNAc...) asparagine glycosylation is present at N133. Positions 164-192 (LRYGKKDLLFKAQQLTDLEQKLAVAKNEL) are leucine-zipper. The segment at 225–346 (ALSLITSNPT…GMAAREEKIL (122 aa)) is disordered. A compositionally biased stretch (low complexity) spans 250-261 (AAAKSKPQQSAS). Over residues 262–283 (GNNESSQVESTKEGSPSTTACD) the composition is skewed to polar residues. N264 carries an N-linked (GlcNAc...) asparagine glycan. Positions 286-298 (DEGRTCSIKHKES) are enriched in basic and acidic residues. N302 carries an N-linked (GlcNAc...) asparagine glycan.

Its subcellular location is the secreted. This Pongo abelii (Sumatran orangutan) protein is Leucine zipper protein 2 (LUZP2).